An 814-amino-acid chain; its full sequence is Leucine-rich repeat-containing protein 41 (814 aa).

Positions 45–54 (ALFELCGRAV) are interaction with Elongin BC complex. Phosphoserine is present on residues Ser-155, Ser-276, and Ser-326. The segment at 265–408 (LCGEASRGRA…KKGARTRQGC (144 aa)) is disordered. Thr-327 bears the Phosphothreonine mark. Low complexity predominate over residues 354–385 (TKRPPSAPATTSSASASSSTSSSKRAPASSAP). Ser-375 carries the post-translational modification Phosphoserine. Residues 389–403 (PLKRFKRAAGKKGAR) show a composition bias toward basic residues. 7 LRR repeats span residues 489 to 509 (WVSL…IFRL), 520 to 532 (AGCR…LSDL), 533 to 557 (FSPL…VLSI), 615 to 637 (SGSL…FGLV), 638 to 661 (LQTL…LADC), 703 to 730 (NSTL…VFSE), and 733 to 754 (SSSL…LLEF).

In terms of assembly, part of a E3 ubiquitin ligase complex with elongin BC complex (ELOB and ELOC), RBX1 and CUL5.

The protein is Leucine-rich repeat-containing protein 41 (LRRC41) of Bos taurus (Bovine).